A 210-amino-acid polypeptide reads, in one-letter code: NADH dehydrogenase [ubiquinone] iron-sulfur protein 8, mitochondrial (210 aa).

The N-terminal 34 residues, 1 to 34, are a transit peptide targeting the mitochondrion; that stretch reads MRCLTTPVLLRALAQAARAGPPGGRSLHSSAVAA. 2 4Fe-4S ferredoxin-type domains span residues 102-131 and 141-170; these read RRYPSGEERCIACKLCEAICPAQAITIEAE and TRYDIDMTKCIYCGFCQEACPVDAIVEGPN. The [4Fe-4S] cluster site is built by Cys-111, Cys-114, Cys-117, Cys-121, Cys-150, Cys-153, Cys-156, and Cys-160.

Belongs to the complex I 23 kDa subunit family. Core subunit of respiratory chain NADH dehydrogenase (Complex I) which is composed of 45 different subunits. This is a component of the iron-sulfur (IP) fragment of the enzyme. Interacts with RAB5IF. Requires [4Fe-4S] cluster as cofactor.

The protein resides in the mitochondrion inner membrane. The catalysed reaction is a ubiquinone + NADH + 5 H(+)(in) = a ubiquinol + NAD(+) + 4 H(+)(out). Functionally, core subunit of the mitochondrial membrane respiratory chain NADH dehydrogenase (Complex I) which catalyzes electron transfer from NADH through the respiratory chain, using ubiquinone as an electron acceptor. Essential for the catalytic activity and assembly of complex I. The polypeptide is NADH dehydrogenase [ubiquinone] iron-sulfur protein 8, mitochondrial (NDUFS8) (Gorilla gorilla gorilla (Western lowland gorilla)).